The following is a 142-amino-acid chain: Large ribosomal subunit protein uL13 (142 aa).

This sequence belongs to the universal ribosomal protein uL13 family. As to quaternary structure, part of the 50S ribosomal subunit.

In terms of biological role, this protein is one of the early assembly proteins of the 50S ribosomal subunit, although it is not seen to bind rRNA by itself. It is important during the early stages of 50S assembly. The sequence is that of Large ribosomal subunit protein uL13 from Ralstonia pickettii (strain 12J).